Here is a 285-residue protein sequence, read N- to C-terminus: 4-diphosphocytidyl-2-C-methyl-D-erythritol kinase (285 aa).

Lysine 12 is an active-site residue. Residue proline 94–serine 104 coordinates ATP. Residue aspartate 136 is part of the active site.

It belongs to the GHMP kinase family. IspE subfamily.

It catalyses the reaction 4-CDP-2-C-methyl-D-erythritol + ATP = 4-CDP-2-C-methyl-D-erythritol 2-phosphate + ADP + H(+). Its pathway is isoprenoid biosynthesis; isopentenyl diphosphate biosynthesis via DXP pathway; isopentenyl diphosphate from 1-deoxy-D-xylulose 5-phosphate: step 3/6. Functionally, catalyzes the phosphorylation of the position 2 hydroxy group of 4-diphosphocytidyl-2C-methyl-D-erythritol. The sequence is that of 4-diphosphocytidyl-2-C-methyl-D-erythritol kinase from Paracidovorax citrulli (strain AAC00-1) (Acidovorax citrulli).